The sequence spans 236 residues: Glycoprotein U23 (236 aa).

A signal peptide spans 1–17 (MLFLSFLLVCLCEEVRM). N67, N80, and N103 each carry an N-linked (GlcNAc...) asparagine; by host glycan. Residues 184–204 (LVIWIGGISFIGAFVILIVIL) traverse the membrane as a helical segment.

The protein resides in the membrane. This chain is Glycoprotein U23 (U23), found in Human herpesvirus 6A (strain Uganda-1102) (HHV-6 variant A).